A 142-amino-acid polypeptide reads, in one-letter code: Hemoglobin subunit theta-1 (142 aa).

The 141-residue stretch at 2–142 (ALAAADRATV…VISALASDCR (141 aa)) folds into the Globin domain. The heme b site is built by histidine 59 and histidine 88.

This sequence belongs to the globin family.

The chain is Hemoglobin subunit theta-1 (HBQ1) from Equus caballus (Horse).